A 163-amino-acid polypeptide reads, in one-letter code: SsrA-binding protein (163 aa).

It belongs to the SmpB family.

Its subcellular location is the cytoplasm. Functionally, required for rescue of stalled ribosomes mediated by trans-translation. Binds to transfer-messenger RNA (tmRNA), required for stable association of tmRNA with ribosomes. tmRNA and SmpB together mimic tRNA shape, replacing the anticodon stem-loop with SmpB. tmRNA is encoded by the ssrA gene; the 2 termini fold to resemble tRNA(Ala) and it encodes a 'tag peptide', a short internal open reading frame. During trans-translation Ala-aminoacylated tmRNA acts like a tRNA, entering the A-site of stalled ribosomes, displacing the stalled mRNA. The ribosome then switches to translate the ORF on the tmRNA; the nascent peptide is terminated with the 'tag peptide' encoded by the tmRNA and targeted for degradation. The ribosome is freed to recommence translation, which seems to be the essential function of trans-translation. This Shewanella putrefaciens (strain CN-32 / ATCC BAA-453) protein is SsrA-binding protein.